Consider the following 230-residue polypeptide: 7-cyano-7-deazaguanine synthase (230 aa).

9–19 (LSGGLDSATTA) contributes to the ATP binding site. 4 residues coordinate Zn(2+): cysteine 190, cysteine 198, cysteine 201, and cysteine 204.

The protein belongs to the QueC family. The cofactor is Zn(2+).

The enzyme catalyses 7-carboxy-7-deazaguanine + NH4(+) + ATP = 7-cyano-7-deazaguanine + ADP + phosphate + H2O + H(+). Its pathway is purine metabolism; 7-cyano-7-deazaguanine biosynthesis. Catalyzes the ATP-dependent conversion of 7-carboxy-7-deazaguanine (CDG) to 7-cyano-7-deazaguanine (preQ(0)). The protein is 7-cyano-7-deazaguanine synthase of Microcystis aeruginosa (strain NIES-843 / IAM M-2473).